The chain runs to 87 residues: Sec-independent protein translocase protein TatA (87 aa).

The chain crosses the membrane as a helical span at residues 3 to 23 (GTFSWTHLLIIALLFVVLFGA). The interval 47 to 87 (MQHETPQANAAPVQQPAQQLPPAQPAQAPAQPVNQAEQKSA) is disordered. A compositionally biased stretch (low complexity) spans 52 to 87 (PQANAAPVQQPAQQLPPAQPAQAPAQPVNQAEQKSA).

The protein belongs to the TatA/E family. In terms of assembly, the Tat system comprises two distinct complexes: a TatABC complex, containing multiple copies of TatA, TatB and TatC subunits, and a separate TatA complex, containing only TatA subunits. Substrates initially bind to the TatABC complex, which probably triggers association of the separate TatA complex to form the active translocon.

The protein resides in the cell membrane. Its function is as follows. Part of the twin-arginine translocation (Tat) system that transports large folded proteins containing a characteristic twin-arginine motif in their signal peptide across membranes. TatA could form the protein-conducting channel of the Tat system. The protein is Sec-independent protein translocase protein TatA of Nocardia farcinica (strain IFM 10152).